A 282-amino-acid chain; its full sequence is Bifunctional protein FolD (282 aa).

NADP(+) contacts are provided by residues 166 to 168 (GAS) and I232.

This sequence belongs to the tetrahydrofolate dehydrogenase/cyclohydrolase family. As to quaternary structure, homodimer.

The catalysed reaction is (6R)-5,10-methylene-5,6,7,8-tetrahydrofolate + NADP(+) = (6R)-5,10-methenyltetrahydrofolate + NADPH. The enzyme catalyses (6R)-5,10-methenyltetrahydrofolate + H2O = (6R)-10-formyltetrahydrofolate + H(+). The protein operates within one-carbon metabolism; tetrahydrofolate interconversion. Functionally, catalyzes the oxidation of 5,10-methylenetetrahydrofolate to 5,10-methenyltetrahydrofolate and then the hydrolysis of 5,10-methenyltetrahydrofolate to 10-formyltetrahydrofolate. This chain is Bifunctional protein FolD, found in Haemophilus influenzae (strain PittEE).